The sequence spans 458 residues: Mitochondrial-processing peptidase subunit beta (458 aa).

The N-terminal 41 residues, 1–41 (MYRRLASGLYQTSQRRIAQVQPKSVFVPETIVTTLPNGFRV), are a transit peptide targeting the mitochondrion. H73 contacts Zn(2+). E76 acts as the Proton acceptor in catalysis. Zn(2+)-binding residues include H77 and E153.

The protein belongs to the peptidase M16 family. In terms of assembly, heterodimer of mppa-1 (alpha) and mppb-1 (beta) subunits, forming the mitochondrial processing protease (MPP) in which mppa-1 is involved in substrate recognition and binding and mppb-1 is the catalytic subunit. Zn(2+) is required as a cofactor.

Its subcellular location is the mitochondrion matrix. It catalyses the reaction Release of N-terminal transit peptides from precursor proteins imported into the mitochondrion, typically with Arg in position P2.. With respect to regulation, binding to mppa-1 is required for catalytic activity. Inhibited by metal chelator ethylenediaminetetraacetic acid (EDTA). Catalytic subunit of the essential mitochondrial processing protease (MPP), which cleaves the mitochondrial sequence off newly imported precursors proteins. Preferentially, cleaves after an arginine at position P2. In Caenorhabditis elegans, this protein is Mitochondrial-processing peptidase subunit beta.